A 490-amino-acid polypeptide reads, in one-letter code: ATP synthase subunit beta, chloroplastic (490 aa).

170-177 (GGAGVGKT) contributes to the ATP binding site.

The protein belongs to the ATPase alpha/beta chains family. F-type ATPases have 2 components, CF(1) - the catalytic core - and CF(0) - the membrane proton channel. CF(1) has five subunits: alpha(3), beta(3), gamma(1), delta(1), epsilon(1). CF(0) has four main subunits: a(1), b(1), b'(1) and c(9-12).

It is found in the plastid. The protein resides in the chloroplast thylakoid membrane. The enzyme catalyses ATP + H2O + 4 H(+)(in) = ADP + phosphate + 5 H(+)(out). Functionally, produces ATP from ADP in the presence of a proton gradient across the membrane. The catalytic sites are hosted primarily by the beta subunits. The polypeptide is ATP synthase subunit beta, chloroplastic (Calystegia sepium (Hedge bindweed)).